The following is a 91-amino-acid chain: Protein YchS (91 aa).

The protein is Protein YchS (ychS) of Escherichia coli O157:H7.